Reading from the N-terminus, the 481-residue chain is Aspartyl/glutamyl-tRNA(Asn/Gln) amidotransferase subunit B (481 aa).

It belongs to the GatB/GatE family. GatB subfamily. Heterotrimer of A, B and C subunits.

It carries out the reaction L-glutamyl-tRNA(Gln) + L-glutamine + ATP + H2O = L-glutaminyl-tRNA(Gln) + L-glutamate + ADP + phosphate + H(+). The enzyme catalyses L-aspartyl-tRNA(Asn) + L-glutamine + ATP + H2O = L-asparaginyl-tRNA(Asn) + L-glutamate + ADP + phosphate + 2 H(+). Functionally, allows the formation of correctly charged Asn-tRNA(Asn) or Gln-tRNA(Gln) through the transamidation of misacylated Asp-tRNA(Asn) or Glu-tRNA(Gln) in organisms which lack either or both of asparaginyl-tRNA or glutaminyl-tRNA synthetases. The reaction takes place in the presence of glutamine and ATP through an activated phospho-Asp-tRNA(Asn) or phospho-Glu-tRNA(Gln). In Ehrlichia ruminantium (strain Gardel), this protein is Aspartyl/glutamyl-tRNA(Asn/Gln) amidotransferase subunit B.